The chain runs to 416 residues: CinA-like protein (416 aa).

Belongs to the CinA family.

This chain is CinA-like protein, found in Nostoc punctiforme (strain ATCC 29133 / PCC 73102).